A 141-amino-acid chain; its full sequence is Translation initiation factor IF-1, chloroplastic (141 aa).

Residues 1–46 constitute a chloroplast transit peptide; that stretch reads MLQLCSTFRPQLLLPCQFRFTNGVLIPQINYVASNSVVNIRPMIRC. The segment at 49 to 69 is disordered; that stretch reads ASGGRGGANRSKPAKPQVKEG. In terms of domain architecture, S1-like spans 63-138; that stretch reads KPQVKEGSNK…TKGRIIFRMS (76 aa).

Belongs to the IF-1 family. In terms of assembly, component of the 30S ribosomal translation pre-initiation complex which assembles on the 30S ribosome in the order IF-2 and IF-3, IF-1 and N-formylmethionyl-tRNA(fMet); mRNA recruitment can occur at any time during PIC assembly.

The protein resides in the plastid. The protein localises to the chloroplast. In terms of biological role, one of the essential components for the initiation of protein synthesis. Stabilizes the binding of IF-2 and IF-3 on the 30S subunit to which N-formylmethionyl-tRNA(fMet) subsequently binds. Helps modulate mRNA selection, yielding the 30S pre-initiation complex (PIC). Upon addition of the 50S ribosomal subunit IF-1, IF-2 and IF-3 are released leaving the mature 70S translation initiation complex. The chain is Translation initiation factor IF-1, chloroplastic from Arabidopsis thaliana (Mouse-ear cress).